The primary structure comprises 307 residues: MEDAGQNPLDDEAEITEIPTLEAIKQNLKYLNSDLEKDLQRLDEANQILLRKIQKKEESIQSLERDIALSIGRVPERDDFNEILAQKETALKDLELESAKLEKKNKTLSKNVMELQKKISKGLKNIASDPETLKKKVTEFKVKLQKSTESCAQQEKEIAKMESDYQSVFQLCEDQAHYIKKYQEILREMEKEKEVMLLEKEISKAQNDSSQVVKPGSTLVETIQSNMEKNIIKKQKRKFWLRHFRYLFFMVMIVIRLLGYVFFHLQYVNPDFLVDTLPMLMSRSSLKWLRDILFPFLTLEVEDVLPH.

Residues 20-212 adopt a coiled-coil conformation; the sequence is TLEAIKQNLK…SKAQNDSSQV (193 aa). Residues 246 to 268 form a helical membrane-spanning segment; it reads YLFFMVMIVIRLLGYVFFHLQYV.

The protein belongs to the TMCO5 family.

The protein localises to the membrane. The sequence is that of Transmembrane and coiled-coil domain-containing protein 5B (Tmco5b) from Mus musculus (Mouse).